Here is a 277-residue protein sequence, read N- to C-terminus: MPTRIDRRFEELAKAGRAGLVTFVMAGDPDLSTSLEILHALVRAGADVLEVGMPFTDPMADGPAIQAAGLRALKAGMTLRKTLDMVAAFRAKDATTPIILMGYYNPIYIFGVEAFLNRAKEVGVDGLIVVDLPPEEDEELCLPARAAGLNFIRLATPTTDAVRLPAVLANTSGFLYYVSITGITGAGVPDYSKVASAVAGIKAHTNLPVAVGFGVKTAESARTIACHADAVVVGSAIVDALRASLDGEGRATPACIGTVEKLVAELAEGVRSAAAAA.

Active-site proton acceptor residues include Glu-50 and Asp-61.

The protein belongs to the TrpA family. Tetramer of two alpha and two beta chains.

It carries out the reaction (1S,2R)-1-C-(indol-3-yl)glycerol 3-phosphate + L-serine = D-glyceraldehyde 3-phosphate + L-tryptophan + H2O. Its pathway is amino-acid biosynthesis; L-tryptophan biosynthesis; L-tryptophan from chorismate: step 5/5. Functionally, the alpha subunit is responsible for the aldol cleavage of indoleglycerol phosphate to indole and glyceraldehyde 3-phosphate. The sequence is that of Tryptophan synthase alpha chain from Beijerinckia indica subsp. indica (strain ATCC 9039 / DSM 1715 / NCIMB 8712).